A 272-amino-acid polypeptide reads, in one-letter code: MNGVSEGTRGCSDRQPGALTQGHSCSRKMNASRCLSEEVGSLRPLTMAVLSASFVVGVLGNGLVPWVTVFRMARTVSTVCFFHLALADFMLSLSLPILVYYIVSRQWLLGEWACKLYTGFVFLTFSTSNCLLVLISVDRCISVLYPVWALNHRTEQRASWLAFGVWLLAAALCSAHLKFRTTRKWNGCMQCYLQFNLENETAQMWTQEVFGRQMAVIMAHFLLGFLGPLAIIGTCAHLIRAKLLREGWVHANRPKRLLLVLVSALSAGSHLT.

A disordered region spans residues 1 to 24; that stretch reads MNGVSEGTRGCSDRQPGALTQGHS. The Extracellular portion of the chain corresponds to 1-46; it reads MNGVSEGTRGCSDRQPGALTQGHSCSRKMNASRCLSEEVGSLRPLT. A glycan (N-linked (GlcNAc...) asparagine) is linked at Asn30. Residues 47–67 traverse the membrane as a helical segment; the sequence is MAVLSASFVVGVLGNGLVPWV. Residues 68–78 are Cytoplasmic-facing; that stretch reads TVFRMARTVST. The helical transmembrane segment at 79–99 threads the bilayer; it reads VCFFHLALADFMLSLSLPILV. At 100–116 the chain is on the extracellular side; the sequence is YYIVSRQWLLGEWACKL. A disulfide bridge links Cys114 with Cys191. A helical membrane pass occupies residues 117-137; sequence YTGFVFLTFSTSNCLLVLISV. The Cytoplasmic portion of the chain corresponds to 138-158; the sequence is DRCISVLYPVWALNHRTEQRA. The helical transmembrane segment at 159–179 threads the bilayer; that stretch reads SWLAFGVWLLAAALCSAHLKF. At 180 to 213 the chain is on the extracellular side; the sequence is RTTRKWNGCMQCYLQFNLENETAQMWTQEVFGRQ. Residue Asn199 is glycosylated (N-linked (GlcNAc...) asparagine). The chain crosses the membrane as a helical span at residues 214-234; it reads MAVIMAHFLLGFLGPLAIIGT. Topologically, residues 235 to 272 are cytoplasmic; sequence CAHLIRAKLLREGWVHANRPKRLLLVLVSALSAGSHLT.

The protein belongs to the G-protein coupled receptor 1 family.

The protein resides in the cell membrane. Orphan receptor. The polypeptide is Putative G-protein coupled receptor GPR32P1 (GPR32P1) (Homo sapiens (Human)).